We begin with the raw amino-acid sequence, 517 residues long: G-protein coupled receptor Mth (517 aa).

An N-terminal signal peptide occupies residues 1 to 27 (MKLFWVKRLLRISTVVVTLLLLQRTNA). The Extracellular segment spans residues 28–221 (AIPDCDYYDT…CLISPSRMGQ (194 aa)). 5 disulfide bridges follow: C32–C86, C88–C93, C97–C191, C98–C109, and C153–C212. N-linked (GlcNAc...) asparagine glycosylation is found at N48 and N61. 3 N-linked (GlcNAc...) asparagine glycosylation sites follow: N126, N173, and N201. A helical transmembrane segment spans residues 222–242 (TVVMITSLVCMVLTITVYLFV). The Cytoplasmic portion of the chain corresponds to 243 to 251 (KKLQNLHGK). A helical membrane pass occupies residues 252-272 (CFMCYMVCLFMAYLLLLLNLW). Over 273–279 (QMSQNFC) the chain is Extracellular. The helical transmembrane segment at 280–300 (ITAGFLGYFFVMAAFLWLSVI) threads the bilayer. Residues 301–323 (SLHLWNTFSGSAHNANRFLSEHR) are Cytoplasmic-facing. A helical transmembrane segment spans residues 324–344 (FLAYNTYAWGMAVVLTGITYL). The Extracellular segment spans residues 345 to 373 (ADKVVENEDWNPRMGFGGHCWICTQSWSA). A helical membrane pass occupies residues 374-394 (MLYFYGPMVFLIAFNITMFIL). Residues 395-427 (TANRIIGVKKDIQKFAHRQERKQKLNSDKQTYT) lie on the Cytoplasmic side of the membrane. The helical transmembrane segment at 428–448 (FFLRLFIIMGLTWSLEIGSYI) threads the bilayer. Topologically, residues 449-457 (SQFNQTWSN) are extracellular. N452 carries an N-linked (GlcNAc...) asparagine glycan. The helical transmembrane segment at 458–478 (VFLVADYLNWSQGIIIFILFV) threads the bilayer. The Cytoplasmic segment spans residues 479–517 (LKRSTLRLLMESIRGEGEEVNDSEEEISLENTKYDRNVL).

The protein belongs to the G-protein coupled receptor 2 family. Mth subfamily. In terms of assembly, homodimer.

The protein localises to the cell membrane. Functionally, involved in biological aging and stress response. Essential for adult survival. The chain is G-protein coupled receptor Mth (mth) from Drosophila yakuba (Fruit fly).